The primary structure comprises 331 residues: Cytosolic arginine sensor for mTORC1 subunit 1 (331 aa).

Serine 14 carries the post-translational modification Phosphoserine. The ACT 1 domain maps to 72–139; that stretch reads AEATWLVMNV…SVVIHTLARE (68 aa). 110–111 contacts L-arginine; sequence SV. Positions 155 to 174 are disordered; sequence GDDSSNGFPQAQHGPSPTVH. The span at 156–174 shows a compositional bias: polar residues; it reads DDSSNGFPQAQHGPSPTVH. An ACT 2 domain is found at 262-322; sequence WRMVRIGGQP…SCVIDILQRR (61 aa). Residues glycine 273, 279 to 280, and 299 to 303 contribute to the L-arginine site; these read IV and TFNFD.

It belongs to the GATS family. As to quaternary structure, forms homodimers and heterodimers with CASTOR2. Interacts with the GATOR2 complex which is composed of MIOS, SEC13, SEH1L, WDR24 and WDR59; the interaction is negatively regulated by arginine. Interacts with TM4SF5; the interaction is positively regulated by leucine and is negatively regulated by arginine. Post-translationally, phosphorylation at Ser-14 by AKT1, promoting the interaction between CASTOR1 and RNF167. In terms of processing, ubiquitinated by RNF167 via 'Lys-29'-polyubiquitination, leading to its degradation, releasing the GATOR2 complex. Ubiquitination by RNF167 is promoted by phosphorylation at Ser-14 by AKT1.

It is found in the cytoplasm. Its subcellular location is the cytosol. In terms of biological role, functions as an intracellular arginine sensor within the amino acid-sensing branch of the TORC1 signaling pathway. As a homodimer or a heterodimer with CASTOR2, binds and inhibits the GATOR subcomplex GATOR2 and thereby mTORC1. Binding of arginine to CASTOR1 allosterically disrupts the interaction of CASTOR1-containing dimers with GATOR2 which can in turn activate mTORC1 and the TORC1 signaling pathway. The chain is Cytosolic arginine sensor for mTORC1 subunit 1 from Rattus norvegicus (Rat).